The sequence spans 552 residues: Glutamate--tRNA ligase (552 aa).

Residues 41–51 (PSPTGFQHIGG) carry the 'HIGH' region motif. Residues 293–297 (KLSKR) carry the 'KMSKS' region motif. Lys296 lines the ATP pocket.

It belongs to the class-I aminoacyl-tRNA synthetase family. Glutamate--tRNA ligase type 1 subfamily. In terms of assembly, monomer.

It localises to the cytoplasm. The enzyme catalyses tRNA(Glu) + L-glutamate + ATP = L-glutamyl-tRNA(Glu) + AMP + diphosphate. Its function is as follows. Catalyzes the attachment of glutamate to tRNA(Glu) in a two-step reaction: glutamate is first activated by ATP to form Glu-AMP and then transferred to the acceptor end of tRNA(Glu). This Clostridium perfringens (strain SM101 / Type A) protein is Glutamate--tRNA ligase.